Here is a 2151-residue protein sequence, read N- to C-terminus: RNA-directed RNA polymerase L (2151 aa).

Residues histidine 36, glutamate 54, aspartate 97, glutamate 110, and valine 111 each contribute to the Mn(2+) site. Lysine 124 (for endonuclease activity) is an active-site residue. The region spanning 956 to 1142 (NGKFIRMKRK…SVNTEMWKSM (187 aa)) is the RdRp catalytic domain. Aspartate 1099 provides a ligand contact to Mg(2+).

It belongs to the Bunyavirales RNA polymerase family. Interacts with the viral nucleoprotein. Mn(2+) is required as a cofactor. Mg(2+) serves as cofactor.

Its subcellular location is the host cytoplasm. It localises to the host perinuclear region. It catalyses the reaction RNA(n) + a ribonucleoside 5'-triphosphate = RNA(n+1) + diphosphate. Functionally, RNA-dependent RNA polymerase, which is responsible for the replication and transcription of the viral RNA genome using antigenomic RNA as an intermediate. During transcription, synthesizes subgenomic RNAs and assures their capping by a cap-snatching mechanism, which involves the endonuclease activity cleaving the host capped pre-mRNAs. These short capped RNAs are then used as primers for viral transcription. Cleaves ssRNA substrates but not DNA. Seems to downregulate the expression of its own and heterologous mRNAs through its endonuclease activity. This chain is RNA-directed RNA polymerase L, found in Apodemus agrarius (Eurasian field mouse).